Consider the following 271-residue polypeptide: Thiamine thiazole synthase (271 aa).

NAD(+)-binding positions include Ser39, 58–59 (ER), Gly66, Val130, and 158–160 (HVD). Asp160 and His175 together coordinate Fe cation. Met225 is an NAD(+) binding site. Arg235 lines the glycine pocket.

This sequence belongs to the THI4 family. Homooctamer; tetramer of dimers. Fe(2+) serves as cofactor.

The enzyme catalyses hydrogen sulfide + glycine + NAD(+) = ADP-5-ethyl-4-methylthiazole-2-carboxylate + nicotinamide + 3 H2O + H(+). Its pathway is cofactor biosynthesis; thiamine diphosphate biosynthesis. Its function is as follows. Involved in the biosynthesis of the thiazole moiety of thiamine. Catalyzes the conversion of NAD and glycine to adenosine diphosphate 5-(2-hydroxyethyl)-4-methylthiazole-2-carboxylate (ADT), an adenylated thiazole intermediate, using free sulfide as a source of sulfur. The protein is Thiamine thiazole synthase of Metallosphaera sedula (strain ATCC 51363 / DSM 5348 / JCM 9185 / NBRC 15509 / TH2).